The chain runs to 232 residues: tRNA (guanine-N(1)-)-methyltransferase (232 aa).

S-adenosyl-L-methionine-binding positions include G114 and 134-139; that span reads IGDYIL.

It belongs to the RNA methyltransferase TrmD family. As to quaternary structure, homodimer.

The protein localises to the cytoplasm. The enzyme catalyses guanosine(37) in tRNA + S-adenosyl-L-methionine = N(1)-methylguanosine(37) in tRNA + S-adenosyl-L-homocysteine + H(+). Its function is as follows. Specifically methylates guanosine-37 in various tRNAs. The chain is tRNA (guanine-N(1)-)-methyltransferase from Wolbachia pipientis subsp. Culex pipiens (strain wPip).